Consider the following 420-residue polypeptide: LanC-like protein 3 (420 aa).

This sequence belongs to the LanC-like protein family.

The chain is LanC-like protein 3 (Lancl3) from Mus musculus (Mouse).